A 168-amino-acid polypeptide reads, in one-letter code: Probable chemoreceptor glutamine deamidase CheD 2 (168 aa).

This sequence belongs to the CheD family.

The enzyme catalyses L-glutaminyl-[protein] + H2O = L-glutamyl-[protein] + NH4(+). Functionally, probably deamidates glutamine residues to glutamate on methyl-accepting chemotaxis receptors (MCPs), playing an important role in chemotaxis. The protein is Probable chemoreceptor glutamine deamidase CheD 2 of Leptospira interrogans serogroup Icterohaemorrhagiae serovar copenhageni (strain Fiocruz L1-130).